The primary structure comprises 701 residues: Polyribonucleotide nucleotidyltransferase (701 aa).

Positions 487 and 493 each coordinate Mg(2+). The 60-residue stretch at Pro-554–Ile-613 folds into the KH domain. The 69-residue stretch at Gly-623–Lys-691 folds into the S1 motif domain.

Belongs to the polyribonucleotide nucleotidyltransferase family. Component of the RNA degradosome, which is a multiprotein complex involved in RNA processing and mRNA degradation. Requires Mg(2+) as cofactor.

It localises to the cytoplasm. It catalyses the reaction RNA(n+1) + phosphate = RNA(n) + a ribonucleoside 5'-diphosphate. Functionally, involved in mRNA degradation. Catalyzes the phosphorolysis of single-stranded polyribonucleotides processively in the 3'- to 5'-direction. This is Polyribonucleotide nucleotidyltransferase from Pseudomonas putida (strain ATCC 47054 / DSM 6125 / CFBP 8728 / NCIMB 11950 / KT2440).